The chain runs to 497 residues: Mechanosensitive ion channel protein 1, mitochondrial (497 aa).

The N-terminal 86 residues, 1-86 (MAGVRLSLLK…RAFSSKSDDF (86 aa)), are a transit peptide targeting the mitochondrion. The next 5 membrane-spanning stretches (helical) occupy residues 152-172 (DVIV…VVMP), 216-236 (LVTF…TIAA), 238-258 (YFSP…LYRW), 280-300 (VLTL…MASA), and 305-325 (VAVQ…AFAA).

It belongs to the MscS (TC 1.A.23) family.

The protein localises to the mitochondrion membrane. In terms of biological role, mechanosensitive channel that opens in response to stretch forces in the membrane lipid bilayer. The protein is Mechanosensitive ion channel protein 1, mitochondrial (MSL1) of Arabidopsis thaliana (Mouse-ear cress).